Consider the following 215-residue polypeptide: Cytochrome b6 (215 aa).

Residues 32 to 52 (IFYCLGGIVFVSFLIQVATGF) traverse the membrane as a helical segment. Cysteine 35 serves as a coordination point for heme c. Heme b is bound by residues histidine 86 and histidine 100. The next 3 helical transmembrane spans lie at 90–110 (ASMMVLMMILHVFRVYLTGGF), 116–136 (LTWVTGVILGVLTVSFGVTGY), and 186–206 (LHTFVLPLLTAVFMLMHFLMI). Heme b contacts are provided by histidine 187 and histidine 202.

It belongs to the cytochrome b family. PetB subfamily. As to quaternary structure, the 4 large subunits of the cytochrome b6-f complex are cytochrome b6, subunit IV (17 kDa polypeptide, PetD), cytochrome f and the Rieske protein, while the 4 small subunits are PetG, PetL, PetM and PetN. The complex functions as a dimer. The cofactor is heme b. Heme c is required as a cofactor.

Its subcellular location is the plastid. It is found in the chloroplast thylakoid membrane. Functionally, component of the cytochrome b6-f complex, which mediates electron transfer between photosystem II (PSII) and photosystem I (PSI), cyclic electron flow around PSI, and state transitions. In Porphyra purpurea (Red seaweed), this protein is Cytochrome b6.